Here is a 299-residue protein sequence, read N- to C-terminus: Protein phosphatase 1 regulatory subunit 3D (299 aa).

The interval 1–22 is disordered; that stretch reads MSRGPSSAVLPSALGSRKLGPR. Phosphoserine occurs at positions 23, 25, and 28. The tract at residues 37 to 94 is disordered; the sequence is EPRACRPPGSPGRAPPPTPAPSGCDPRLRPIILRRARSLPSSPERRQKAAGAPGAACR. Pro residues predominate over residues 44–56; sequence PGSPGRAPPPTPA. The segment covering 57-67 has biased composition (low complexity); sequence PSGCDPRLRPI. The residue at position 74 (S74) is a Phosphoserine. Low complexity predominate over residues 85 to 94; that stretch reads AAGAPGAACR. A PP1-binding motif motif is present at residues 101–104; it reads LRVR. A Phosphoserine modification is found at S133. Residues 169–278 enclose the CBM21 domain; that stretch reads GERLQRQLVC…NNDHRDYSLT (110 aa).

In terms of assembly, interacts with PPP1CC catalytic subunit of PP1, and associates with glycogen. Interacts with EPM2A; in the presence of NHLC1/malin the interaction leads to PPP1R3D ubiquitination and autophagic degradation. As to expression, expressed in all tissues tested. High expression in skeletal muscle and heart.

Functionally, seems to act as a glycogen-targeting subunit for PP1. PP1 is essential for cell division, and participates in the regulation of glycogen metabolism, muscle contractility and protein synthesis. The polypeptide is Protein phosphatase 1 regulatory subunit 3D (PPP1R3D) (Homo sapiens (Human)).